The following is a 181-amino-acid chain: Translation initiation factor IF-3 (181 aa).

It belongs to the IF-3 family. In terms of assembly, monomer.

It localises to the cytoplasm. In terms of biological role, IF-3 binds to the 30S ribosomal subunit and shifts the equilibrium between 70S ribosomes and their 50S and 30S subunits in favor of the free subunits, thus enhancing the availability of 30S subunits on which protein synthesis initiation begins. The chain is Translation initiation factor IF-3 from Pseudoalteromonas translucida (strain TAC 125).